The following is a 332-amino-acid chain: NADH-quinone oxidoreductase subunit H (332 aa).

8 helical membrane-spanning segments follow: residues 11–31 (TYKI…IVWL), 77–97 (VIFI…WAVI), 110–130 (VGVL…IMGG), 156–176 (IGVI…NDII), 182–202 (LWFI…ALAE), 240–260 (NILL…LSPI), 268–288 (IPGA…FALV), and 307–327 (IFLP…FYFN).

Belongs to the complex I subunit 1 family. In terms of assembly, NDH-1 is composed of 14 different subunits. Subunits NuoA, H, J, K, L, M, N constitute the membrane sector of the complex.

It localises to the cell inner membrane. It catalyses the reaction a quinone + NADH + 5 H(+)(in) = a quinol + NAD(+) + 4 H(+)(out). In terms of biological role, NDH-1 shuttles electrons from NADH, via FMN and iron-sulfur (Fe-S) centers, to quinones in the respiratory chain. The immediate electron acceptor for the enzyme in this species is believed to be ubiquinone. Couples the redox reaction to proton translocation (for every two electrons transferred, four hydrogen ions are translocated across the cytoplasmic membrane), and thus conserves the redox energy in a proton gradient. This subunit may bind ubiquinone. The sequence is that of NADH-quinone oxidoreductase subunit H from Pelagibacter ubique (strain HTCC1062).